The following is a 76-amino-acid chain: Acyl carrier protein (76 aa).

Residues 1–76 enclose the Carrier domain; it reads MATFDEVKEV…AAVDYIGSKQ (76 aa). Residue S36 is modified to O-(pantetheine 4'-phosphoryl)serine.

It belongs to the acyl carrier protein (ACP) family. In terms of processing, 4'-phosphopantetheine is transferred from CoA to a specific serine of apo-ACP by AcpS. This modification is essential for activity because fatty acids are bound in thioester linkage to the sulfhydryl of the prosthetic group.

Its subcellular location is the cytoplasm. Its pathway is lipid metabolism; fatty acid biosynthesis. Carrier of the growing fatty acid chain in fatty acid biosynthesis. The polypeptide is Acyl carrier protein (Deinococcus geothermalis (strain DSM 11300 / CIP 105573 / AG-3a)).